Here is a 416-residue protein sequence, read N- to C-terminus: Squamosa promoter-binding-like protein 8 (416 aa).

Residues 11 to 53 form a disordered region; it reads SSCDDFGYNATPPPPPSLLPIMDQDGGGGSIQRDHHHHHNHQQ. Residues 182 to 260 form an SBP-type zinc finger; it reads PPRCQAEGCK…ADHNRRRRKS (79 aa). 8 residues coordinate Zn(2+): C185, C190, C207, H210, C227, C230, H234, and C246. A Bipartite nuclear localization signal motif is present at residues 243–259; the sequence is KKSCRKRLADHNRRRRK. Residues 250-299 form a disordered region; that stretch reads LADHNRRRRKSKPSDGEHSGEKRRAQANKSAATKDKAGSSSKNAGIGDGF. Basic and acidic residues predominate over residues 261-273; it reads KPSDGEHSGEKRR.

As to expression, expressed in stems, leaf sheaths, and young panicles.

The protein resides in the nucleus. Functionally, probable transcription factor that plays an important role in building the laminar joint between leaf blade and leaf sheath boundary, thereby controlling ligule and auricle development. The protein is Squamosa promoter-binding-like protein 8 (SPL8) of Oryza sativa subsp. indica (Rice).